The following is a 288-amino-acid chain: Bifunctional protein FolD (288 aa).

NADP(+) is bound by residues 166–168 (GAS) and Ile-232.

The protein belongs to the tetrahydrofolate dehydrogenase/cyclohydrolase family. As to quaternary structure, homodimer.

The catalysed reaction is (6R)-5,10-methylene-5,6,7,8-tetrahydrofolate + NADP(+) = (6R)-5,10-methenyltetrahydrofolate + NADPH. It catalyses the reaction (6R)-5,10-methenyltetrahydrofolate + H2O = (6R)-10-formyltetrahydrofolate + H(+). It participates in one-carbon metabolism; tetrahydrofolate interconversion. In terms of biological role, catalyzes the oxidation of 5,10-methylenetetrahydrofolate to 5,10-methenyltetrahydrofolate and then the hydrolysis of 5,10-methenyltetrahydrofolate to 10-formyltetrahydrofolate. The protein is Bifunctional protein FolD of Acidithiobacillus ferrooxidans (strain ATCC 23270 / DSM 14882 / CIP 104768 / NCIMB 8455) (Ferrobacillus ferrooxidans (strain ATCC 23270)).